Here is a 346-residue protein sequence, read N- to C-terminus: Biotin synthase (346 aa).

The Radical SAM core domain maps to 38–256 (RQVQVSTLLS…IAVARIMMPT (219 aa)). Residues Cys-53, Cys-57, and Cys-60 each coordinate [4Fe-4S] cluster. The [2Fe-2S] cluster site is built by Cys-97, Cys-128, Cys-188, and Arg-260.

It belongs to the radical SAM superfamily. Biotin synthase family. In terms of assembly, homodimer. [4Fe-4S] cluster serves as cofactor. Requires [2Fe-2S] cluster as cofactor.

It catalyses the reaction (4R,5S)-dethiobiotin + (sulfur carrier)-SH + 2 reduced [2Fe-2S]-[ferredoxin] + 2 S-adenosyl-L-methionine = (sulfur carrier)-H + biotin + 2 5'-deoxyadenosine + 2 L-methionine + 2 oxidized [2Fe-2S]-[ferredoxin]. It functions in the pathway cofactor biosynthesis; biotin biosynthesis; biotin from 7,8-diaminononanoate: step 2/2. Its function is as follows. Catalyzes the conversion of dethiobiotin (DTB) to biotin by the insertion of a sulfur atom into dethiobiotin via a radical-based mechanism. The protein is Biotin synthase of Cronobacter sakazakii (strain ATCC BAA-894) (Enterobacter sakazakii).